The chain runs to 123 residues: DNA-directed RNA polymerase I subunit RPA12 (123 aa).

Cys-17, Cys-20, Cys-35, Cys-38, Cys-84, and Cys-87 together coordinate Zn(2+). A C4-type zinc finger spans residues 17–38 (CPDCGSVLPLPGVQDAVACTRC). The segment at 80 to 120 (VDRRCSRCGHEGMAYHTRQMRSADEGQTVFYTCTNCKFQEK) adopts a TFIIS-type zinc-finger fold. The Hairpin motif lies at 103–104 (DE). Zn(2+) contacts are provided by Cys-112 and Cys-115.

The protein belongs to the archaeal RpoM/eukaryotic RPA12/RPB9/RPC11 RNA polymerase family. As to quaternary structure, component of the RNA polymerase I (Pol I) complex consisting of at least 13 subunits.

Its subcellular location is the nucleus. The protein localises to the nucleolus. Functionally, core component of RNA polymerase I (Pol I), a DNA-dependent RNA polymerase which synthesizes ribosomal RNA precursors using the four ribonucleoside triphosphates as substrates. Can mediate Pol I proofreading of the nascent RNA transcript. Anchors into the Pol I active site to monitor transcription fidelity and cleave mis-incorporated 5'-ribonucleotides. The sequence is that of DNA-directed RNA polymerase I subunit RPA12 from Bos taurus (Bovine).